Here is a 186-residue protein sequence, read N- to C-terminus: ATP synthase subunit delta (186 aa).

Belongs to the ATPase delta chain family. In terms of assembly, F-type ATPases have 2 components, F(1) - the catalytic core - and F(0) - the membrane proton channel. F(1) has five subunits: alpha(3), beta(3), gamma(1), delta(1), epsilon(1). F(0) has three main subunits: a(1), b(2) and c(10-14). The alpha and beta chains form an alternating ring which encloses part of the gamma chain. F(1) is attached to F(0) by a central stalk formed by the gamma and epsilon chains, while a peripheral stalk is formed by the delta and b chains.

Its subcellular location is the cell inner membrane. Functionally, f(1)F(0) ATP synthase produces ATP from ADP in the presence of a proton or sodium gradient. F-type ATPases consist of two structural domains, F(1) containing the extramembraneous catalytic core and F(0) containing the membrane proton channel, linked together by a central stalk and a peripheral stalk. During catalysis, ATP synthesis in the catalytic domain of F(1) is coupled via a rotary mechanism of the central stalk subunits to proton translocation. In terms of biological role, this protein is part of the stalk that links CF(0) to CF(1). It either transmits conformational changes from CF(0) to CF(1) or is implicated in proton conduction. In Brucella canis (strain ATCC 23365 / NCTC 10854 / RM-666), this protein is ATP synthase subunit delta.